Reading from the N-terminus, the 135-residue chain is ATP synthase epsilon chain (135 aa).

It belongs to the ATPase epsilon chain family. F-type ATPases have 2 components, CF(1) - the catalytic core - and CF(0) - the membrane proton channel. CF(1) has five subunits: alpha(3), beta(3), gamma(1), delta(1), epsilon(1). CF(0) has three main subunits: a, b and c.

The protein localises to the cell inner membrane. Produces ATP from ADP in the presence of a proton gradient across the membrane. The sequence is that of ATP synthase epsilon chain from Allorhizobium ampelinum (strain ATCC BAA-846 / DSM 112012 / S4) (Agrobacterium vitis (strain S4)).